Here is a 597-residue protein sequence, read N- to C-terminus: Elongation factor 4 (597 aa).

Residues 2-184 form the tr-type G domain; that stretch reads KNIRNFSIIA…EIVAKIPAPA (183 aa). Residues 14 to 19 and 131 to 134 contribute to the GTP site; these read DHGKST and NKID.

This sequence belongs to the TRAFAC class translation factor GTPase superfamily. Classic translation factor GTPase family. LepA subfamily.

Its subcellular location is the cell inner membrane. The catalysed reaction is GTP + H2O = GDP + phosphate + H(+). In terms of biological role, required for accurate and efficient protein synthesis under certain stress conditions. May act as a fidelity factor of the translation reaction, by catalyzing a one-codon backward translocation of tRNAs on improperly translocated ribosomes. Back-translocation proceeds from a post-translocation (POST) complex to a pre-translocation (PRE) complex, thus giving elongation factor G a second chance to translocate the tRNAs correctly. Binds to ribosomes in a GTP-dependent manner. This is Elongation factor 4 from Neisseria meningitidis serogroup A / serotype 4A (strain DSM 15465 / Z2491).